Reading from the N-terminus, the 322-residue chain is 3-alpha-hydroxysteroid dehydrogenase (322 aa).

Position 1 is a blocked amino end (Met) (M1). NADP(+) is bound by residues 20–24 (GFGTT) and D50. The active-site Proton donor is the Y55. H117 contacts substrate. Residues 166–167 (SN), Q190, and 216–221 (YCTLGS) each bind NADP(+). A substrate-binding site is contributed by W227. Residue 270–280 (RSFNAKRIKEL) participates in NADP(+) binding.

The protein belongs to the aldo/keto reductase family. Monomer. As to expression, in brain, highest levels found in olfactory bulb. Moderate levels present in cerebellum, cerebral cortex, hypothalamus and pituitary. Low levels present in amygdala, brain stem, caudate putamen, cingulate cortex, hippocampus, midbrain, and thalamus.

It localises to the cytoplasm. It carries out the reaction a 3alpha-hydroxysteroid + NADP(+) = a 3-oxosteroid + NADPH + H(+). The enzyme catalyses a 3alpha-hydroxysteroid + NAD(+) = a 3-oxosteroid + NADH + H(+). Its activity is regulated as follows. Potently inhibited by the nonsteroidal anti-inflammatory drugs (NSAID). Its function is as follows. Besides being a 3-alpha-hydroxysteroid dehydrogenase, the enzyme can accomplish diverse functions: as quinone reductase, as an aromatic alcohol dehydrogenase, as dihydrodiol dehydrogenase, and as 9-, 11-, and 15-hydroxyprostaglandin dehydrogenase. In Rattus norvegicus (Rat), this protein is 3-alpha-hydroxysteroid dehydrogenase (Akr1c9).